We begin with the raw amino-acid sequence, 919 residues long: Leucine--tRNA ligase (919 aa).

The short motif at 83-93 (PYPSGKLHMGH) is the 'HIGH' region element. Positions 670–674 (KMSKS) match the 'KMSKS' region motif. Lys-673 provides a ligand contact to ATP.

The protein belongs to the class-I aminoacyl-tRNA synthetase family.

The protein localises to the cytoplasm. It catalyses the reaction tRNA(Leu) + L-leucine + ATP = L-leucyl-tRNA(Leu) + AMP + diphosphate. The sequence is that of Leucine--tRNA ligase from Psychrobacter cryohalolentis (strain ATCC BAA-1226 / DSM 17306 / VKM B-2378 / K5).